We begin with the raw amino-acid sequence, 715 residues long: Eosinophil peroxidase (715 aa).

The signal sequence occupies residues 1–17 (MHLLPALAGVLATLVLA). Residues 18 to 139 (QPCEGTDPAS…SGCALRDQAE (122 aa)) constitute a propeptide that is removed on maturation. N-linked (GlcNAc...) asparagine glycans are attached at residues Asn52 and Asn113. Cys141 and Cys152 are oxidised to a cystine. Asp232 provides a ligand contact to heme b. Residue His233 is the Proton acceptor of the active site. Asp234 contributes to the Ca(2+) binding site. 2 cysteine pairs are disulfide-bonded: Cys253-Cys263 and Cys257-Cys281. Positions 306, 308, 310, and 312 each coordinate Ca(2+). Residues Asn327 and Asn363 are each glycosylated (N-linked (GlcNAc...) asparagine). Cys359 and Cys370 are joined by a disulfide. Heme b contacts are provided by Glu380 and His474. A 3'-nitrotyrosine modification is found at Tyr488. 2 cysteine pairs are disulfide-bonded: Cys578/Cys635 and Cys676/Cys701. N-linked (GlcNAc...) asparagine glycosylation is found at Asn700 and Asn708.

This sequence belongs to the peroxidase family. XPO subfamily. As to quaternary structure, tetramer of two light chains and two heavy chains. Requires Ca(2+) as cofactor. It depends on heme b as a cofactor.

It localises to the cytoplasmic granule. The catalysed reaction is 2 a phenolic donor + H2O2 = 2 a phenolic radical donor + 2 H2O. In terms of biological role, mediates tyrosine nitration of secondary granule proteins in mature resting eosinophils. Shows significant inhibitory activity towards Mycobacterium tuberculosis H37Rv by inducing bacterial fragmentation and lysis. This is Eosinophil peroxidase (EPX) from Homo sapiens (Human).